Reading from the N-terminus, the 609-residue chain is UvrABC system protein C (609 aa).

Positions 16-94 (SSPGVYRMYD…IKQYMPRYNV (79 aa)) constitute a GIY-YIG domain. A UVR domain is found at 203–238 (LQVMTELVSKMEASALALEYEQAASYRDQIAALRRV).

The protein belongs to the UvrC family. Interacts with UvrB in an incision complex.

It localises to the cytoplasm. Functionally, the UvrABC repair system catalyzes the recognition and processing of DNA lesions. UvrC both incises the 5' and 3' sides of the lesion. The N-terminal half is responsible for the 3' incision and the C-terminal half is responsible for the 5' incision. The chain is UvrABC system protein C from Shewanella sediminis (strain HAW-EB3).